Consider the following 80-residue polypeptide: SPI-1 type 3 secretion system needle filament protein (80 aa).

The protein belongs to the SctF family. The core secretion machinery of the T3SS is composed of approximately 20 different proteins, including cytoplasmic components, a base, an export apparatus and a needle. This subunit polymerizes and forms the helical needle filament. Interacts with the needle tip protein SipD/SctA. Interacts with the needle adapter protein PrgJ/SctI, the secretin InvG/SctC and the minor export apparatus protein SpaP/SctR. In vitro, the needle protomer refolds spontaneously to extend the needle from the distal end.

It localises to the secreted. The protein localises to the cell surface. With respect to regulation, binding of bile salts, including deoxycholate, to the PrgI:SipD interface may inhibit the T3SS function. Functionally, component of the type III secretion system (T3SS), also called injectisome, which is used to inject bacterial effector proteins into eukaryotic host cells. PrgI/SctF1 forms the external needle filament that protrudes from the bacterial surface. Is probably involved in the transduction of an activating signal, thought to be mediated by the distal tip of the needle filament, to the secretion machine. Required for invasion of epithelial cells. Required for the secretion of the effector protein SptP. In terms of biological role, during infection, can induce innate immune responses. The needle proteins interact with host TLR2 or TLR4, and induce signaling by NF-kappa-B and/or AP-1. This activation is MyD88 dependent and results in increased expression of cytokines, including TNF-alpha, IL-6 and IL-8. This is SPI-1 type 3 secretion system needle filament protein from Salmonella typhimurium (strain LT2 / SGSC1412 / ATCC 700720).